The following is a 191-amino-acid chain: Adenylate kinase (191 aa).

An ATP-binding site is contributed by Gly-10 to Thr-15. The segment at Ser-30–Val-59 is NMP. Residues Thr-31, Arg-36, Glu-57–Val-59, Gly-85–Arg-88, and Gln-92 contribute to the AMP site. Residues Gln-126–Asp-136 are LID. ATP is bound at residue Arg-127. AMP-binding residues include Arg-133 and Arg-144. Gly-172 provides a ligand contact to ATP.

Belongs to the adenylate kinase family. In terms of assembly, monomer.

It localises to the cytoplasm. It carries out the reaction AMP + ATP = 2 ADP. Its pathway is purine metabolism; AMP biosynthesis via salvage pathway; AMP from ADP: step 1/1. Its function is as follows. Catalyzes the reversible transfer of the terminal phosphate group between ATP and AMP. Plays an important role in cellular energy homeostasis and in adenine nucleotide metabolism. The sequence is that of Adenylate kinase from Nocardioides sp. (strain ATCC BAA-499 / JS614).